We begin with the raw amino-acid sequence, 114 residues long: MGPGLLCWVLLCPLGEGPVDAGVTQSPTHLIKTRGQHVTLRCSPISGHTSVSSYQQALGQGPQFIFQYYEKEERGRGNFPDQFSGHQFPNYSSELNVNALLLGDSALYLCASSL.

The signal sequence occupies residues 1–21; the sequence is MGPGLLCWVLLCPLGEGPVDA. The 93-residue stretch at 22 to 114 folds into the Ig-like domain; it reads GVTQSPTHLI…SALYLCASSL (93 aa). A disulfide bond links cysteine 42 and cysteine 110. Asparagine 90 carries N-linked (GlcNAc...) asparagine glycosylation.

As to quaternary structure, alpha-beta TR is a heterodimer composed of an alpha and beta chain; disulfide-linked. The alpha-beta TR is associated with the transmembrane signaling CD3 coreceptor proteins to form the TR-CD3 (TcR or TCR). The assembly of alpha-beta TR heterodimers with CD3 occurs in the endoplasmic reticulum where a single alpha-beta TR heterodimer associates with one CD3D-CD3E heterodimer, one CD3G-CD3E heterodimer and one CD247 homodimer forming a stable octameric structure. CD3D-CD3E and CD3G-CD3E heterodimers preferentially associate with TR alpha and TR beta chains, respectively. The association of the CD247 homodimer is the last step of TcR assembly in the endoplasmic reticulum and is required for transport to the cell surface.

Its subcellular location is the cell membrane. In terms of biological role, probable non-functional open reading frame (ORF) of V region of the variable domain of T cell receptor (TR) beta chain. Non-functional ORF generally cannot participate in the synthesis of a productive T cell receptor (TR) chain due to altered V-(D)-J or switch recombination and/or splicing site (at mRNA level) and/or conserved amino acid change (protein level). Alpha-beta T cell receptors are antigen specific receptors which are essential to the immune response and are present on the cell surface of T lymphocytes. Recognize peptide-major histocompatibility (MH) (pMH) complexes that are displayed by antigen presenting cells (APC), a prerequisite for efficient T cell adaptive immunity against pathogens. Binding of alpha-beta TR to pMH complex initiates TR-CD3 clustering on the cell surface and intracellular activation of LCK that phosphorylates the ITAM motifs of CD3G, CD3D, CD3E and CD247 enabling the recruitment of ZAP70. In turn ZAP70 phosphorylates LAT, which recruits numerous signaling molecules to form the LAT signalosome. The LAT signalosome propagates signal branching to three major signaling pathways, the calcium, the mitogen-activated protein kinase (MAPK) kinase and the nuclear factor NF-kappa-B (NF-kB) pathways, leading to the mobilization of transcription factors that are critical for gene expression and essential for T cell growth and differentiation. The T cell repertoire is generated in the thymus, by V-(D)-J rearrangement. This repertoire is then shaped by intrathymic selection events to generate a peripheral T cell pool of self-MH restricted, non-autoaggressive T cells. Post-thymic interaction of alpha-beta TR with the pMH complexes shapes TR structural and functional avidity. The polypeptide is Probable non-functional T cell receptor beta variable 5-7 (Homo sapiens (Human)).